A 341-amino-acid polypeptide reads, in one-letter code: HTH-type transcriptional repressor PurR (341 aa).

The HTH lacI-type domain occupies 2–56; that stretch reads ATIKDVAKRANVSTTTVSHVINKTRFVAEETRNAVWAAIKELHYSPSAVARSLKV. Positions 4–23 form a DNA-binding region, H-T-H motif; it reads IKDVAKRANVSTTTVSHVIN. The DNA-binding element occupies 48–56; sequence SAVARSLKV. Residues tyrosine 73, arginine 190, threonine 192, phenylalanine 221, and aspartate 275 each contribute to the hypoxanthine site.

In terms of assembly, homodimer.

The protein operates within purine metabolism; purine nucleotide biosynthesis [regulation]. In terms of biological role, is the main repressor of the genes involved in the de novo synthesis of purine nucleotides, regulating purB, purC, purEK, purF, purHD, purL, purMN and guaBA expression. PurR is allosterically activated to bind its cognate DNA by binding the purine corepressors, hypoxanthine or guanine, thereby effecting transcription repression. The chain is HTH-type transcriptional repressor PurR from Salmonella arizonae (strain ATCC BAA-731 / CDC346-86 / RSK2980).